The sequence spans 264 residues: MKYMITSKGDEKSDLLRLNMIAGFGEYDMEYDDVEPEIVISIGGDGTFLSAFHQYEERLDEIAFIGIHTGHLGFYADWRPAEANKLVKLVAKGEYQKVSYPLLKTTVKYGIGKKEATYLALNESTVKSSGGPFVVDVVINDIHFERFRGDGLCMSTPSGTTAYNKSLGGALMHPSIEAMQLTEMASINNRVYRTIGSPLVFPKHHVVSLQPVNDKDFQISVDHLSILHRDVQEIRYEVSAKKIHFARFKSFPFWRRVHDSFIED.

Asp-45 functions as the Proton acceptor in the catalytic mechanism. NAD(+)-binding positions include Asp-45 to Gly-46, Asn-122 to Glu-123, Arg-148, Asp-150, Thr-161 to Ser-166, and Ala-185.

It belongs to the NAD kinase family. Requires a divalent metal cation as cofactor.

The protein localises to the cytoplasm. It carries out the reaction NAD(+) + ATP = ADP + NADP(+) + H(+). Functionally, involved in the regulation of the intracellular balance of NAD and NADP, and is a key enzyme in the biosynthesis of NADP. Catalyzes specifically the phosphorylation on 2'-hydroxyl of the adenosine moiety of NAD to yield NADP. This is NAD kinase 1 from Listeria monocytogenes serotype 4b (strain F2365).